The primary structure comprises 55 residues: Large ribosomal subunit protein bL33 (55 aa).

Belongs to the bacterial ribosomal protein bL33 family.

The polypeptide is Large ribosomal subunit protein bL33 (Rhizobium meliloti (strain 1021) (Ensifer meliloti)).